The sequence spans 448 residues: MSFTPGKQSSSRASSGNRSGNGILKWADQSDQSRNVQTRGRRAQPKQTATSQQPSGGNVVPYYSWFSGITQFQKGKEFEFAEGQGVPIAPGVPATEAKGYWYRHNRRSFKTADGNQRQLLPRWYFYYLGTGPHAKDQYGTDIDGVYWVASNQADVNTPADILDRDPSSDEAIPTRFPPGTVLPQGYYIEGSGRSAPNSRSTSRASSRASSAGSRSRANSGNRTPTSGVTPDMADQIASLVLAKLGKDAAKPQQVTKQTAKEIRQKILNKPRQKRSPNKQCTVQQCFGKRGPNQNFGGGEMLKLGTSDPQFPILAELAPTAGAFFFGSRLELAKVQNLSGNLDEPQKDVYELRYNGAIRFDSTLSGFETIMKVLNENLNAYQQQDGTMNMSPKPQRQRGQKNGQGENDNISVAAPKSRVQQNKIRELTAEDISLLKKMDEPFTEDTSEI.

A disordered region spans residues 1–55; that stretch reads MSFTPGKQSSSRASSGNRSGNGILKWADQSDQSRNVQTRGRRAQPKQTATSQQPS. A compositionally biased stretch (low complexity) spans 9-22; that stretch reads SSSRASSGNRSGNG. 2 stretches are compositionally biased toward polar residues: residues 29 to 38 and 45 to 55; these read QSDQSRNVQT and PKQTATSQQPS. Residues 52–194 are RNA-binding; the sequence is QQPSGGNVVP…GYYIEGSGRS (143 aa). Residues 61–190 form the CoV N NTD domain; the sequence is PYYSWFSGIT…VLPQGYYIEG (130 aa). Residues Arg-106, Arg-122, and Arg-164 each contribute to the RNA site. Disordered stretches follow at residues 158–231 and 383–420; these read PADI…VTPD and QDGT…RVQQ. Phosphoserine; by host is present on Ser-167. A Phosphothreonine; by host modification is found at Thr-174. Ser-191 bears the Phosphoserine; by host mark. Over residues 193 to 223 the composition is skewed to low complexity; it reads RSAPNSRSTSRASSRASSAGSRSRANSGNRT. In terms of domain architecture, CoV N CTD spans 259–384; it reads AKEIRQKILN…ENLNAYQQQD (126 aa). The segment at 266–384 is dimerization; sequence ILNKPRQKRS…ENLNAYQQQD (119 aa). 2 stretches are compositionally biased toward polar residues: residues 383–393 and 399–409; these read QDGTMNMSPKP and QKNGQGENDNI. Phosphoserine; by host is present on Ser-390. Thr-427 bears the Phosphothreonine; by host mark.

The protein belongs to the betacoronavirus nucleocapsid protein family. As to quaternary structure, homooligomer. Both monomeric and oligomeric forms interact with RNA. Interacts with protein M. Interacts with NSP3; this interaction serves to tether the genome to the newly translated replicase-transcriptase complex at a very early stage of infection. Post-translationally, ADP-ribosylated. The ADP-ribosylation is retained in the virion during infection. In terms of processing, phosphorylated on serine and threonine residues.

The protein resides in the virion. Its subcellular location is the host endoplasmic reticulum-Golgi intermediate compartment. The protein localises to the host Golgi apparatus. In terms of biological role, packages the positive strand viral genome RNA into a helical ribonucleocapsid (RNP) and plays a fundamental role during virion assembly through its interactions with the viral genome and membrane protein M. Plays an important role in enhancing the efficiency of subgenomic viral RNA transcription as well as viral replication. This chain is Nucleoprotein, found in Bovine coronavirus (strain 98TXSF-110-ENT) (BCoV-ENT).